Here is a 428-residue protein sequence, read N- to C-terminus: G2/mitotic-specific cyclin-1 (428 aa).

Positions Met1–Ser22 are disordered.

It belongs to the cyclin family. Cyclin AB subfamily. In terms of assembly, interacts with the CDC2 protein kinase to form a serine/threonine kinase holoenzyme complex also known as maturation promoting factor (MPF). The cyclin subunit imparts substrate specificity to the complex.

In terms of biological role, essential for the control of the cell cycle at the G2/M (mitosis) transition. This is G2/mitotic-specific cyclin-1 from Medicago sativa subsp. varia (Alfalfa).